The following is a 200-amino-acid chain: MISAQAVKELRERTGAGMMDCKNALIEANGDIEKAIDILREKGLAAAAKKAGRTANEGLVEAYIHGGGRIGVLVEVNCETDFVANTEEFRNFVKEICMQIAAANPKYISKEDVPQEVLEKEKEILRAQALNEGKPANVIDRIVEGRLEKFYKENCLLEQEYIRDPEKTVKDLLNEMIAKLGENIVIRRFARFERGEGIEK.

An involved in Mg(2+) ion dislocation from EF-Tu region spans residues 80-83 (TDFV).

It belongs to the EF-Ts family.

It is found in the cytoplasm. Associates with the EF-Tu.GDP complex and induces the exchange of GDP to GTP. It remains bound to the aminoacyl-tRNA.EF-Tu.GTP complex up to the GTP hydrolysis stage on the ribosome. This Caldanaerobacter subterraneus subsp. tengcongensis (strain DSM 15242 / JCM 11007 / NBRC 100824 / MB4) (Thermoanaerobacter tengcongensis) protein is Elongation factor Ts.